The sequence spans 272 residues: Hemin import ATP-binding protein HmuV (272 aa).

One can recognise an ABC transporter domain in the interval 2–255 (LNADHLHVAR…EPIARCYGFR (254 aa)). 34–41 (GRNGAGKS) serves as a coordination point for ATP.

Belongs to the ABC transporter superfamily. Heme (hemin) importer (TC 3.A.1.14.5) family. As to quaternary structure, the complex is composed of two ATP-binding proteins (HmuV), two transmembrane proteins (HmuU) and a solute-binding protein (HmuT).

The protein localises to the cell inner membrane. Its function is as follows. Part of the ABC transporter complex HmuTUV involved in hemin import. Responsible for energy coupling to the transport system. The protein is Hemin import ATP-binding protein HmuV of Burkholderia mallei (strain ATCC 23344).